Reading from the N-terminus, the 528-residue chain is MESAAALHFSRPASLLLLLLLSLCALVSAQVTVVGPTDPILGMVGENTTLRCHLSPEKNAEDMEVRWFRSQFSPAVFVYKGGRERTEEQMEEYRGRTTFVSKDISRGSVALVIHNITAQENGTYRCYFQEGRSYDEAILHLIVAGLGSKPLIEMRGHEDGGIRLECISRGWYPKPLTVWRDPYGGVVPALKEVSMPDADSLFMVTTAVIIRDKSVRNMFCSINNTLLSQKKESVIFIPESFMPSVSPCAVALPIVVVILMILFAVCMYWINKLQKEKKILSGEKEFERETREIAVKELEKERVQKEEELQVKEKLQEELRWRRTFLHAVDVVLDPDTAHPDLFLSEDRRSVRRRPFRHLGESMPDNPERFNSQPCVLGRESFASGKHYWEVEVENVIEWTVGVCRDSVERKGEVLLIPQNGFWTLEMHKSQYRAVSSPDRIIPLKESLCRVGVFLDYEAGDVSFYNMRDRSHIYTCPRSAFSVPVRPFFRLGCEDSPIFICPALTGANGVTVPEEGLTLHRVGTHQSL.

The first 29 residues, 1 to 29 (MESAAALHFSRPASLLLLLLLSLCALVSA), serve as a signal peptide directing secretion. At 30–249 (QVTVVGPTDP…SFMPSVSPCA (220 aa)) the chain is on the extracellular side. The region spanning 31-142 (VTVVGPTDPI…SYDEAILHLI (112 aa)) is the Ig-like V-type domain. N-linked (GlcNAc...) asparagine glycosylation is found at asparagine 47, asparagine 115, and asparagine 121. Cysteine 52 and cysteine 126 are disulfide-bonded. One can recognise an Ig-like C2-type domain in the interval 150–232 (PLIEMRGHED…NNTLLSQKKE (83 aa)). The chain crosses the membrane as a helical span at residues 250 to 270 (VALPIVVVILMILFAVCMYWI). The stretch at 270-320 (INKLQKEKKILSGEKEFERETREIAVKELEKERVQKEEELQVKEKLQEELR) forms a coiled coil. The Cytoplasmic segment spans residues 271 to 528 (NKLQKEKKIL…LHRVGTHQSL (258 aa)). The 197-residue stretch at 311-507 (VKEKLQEELR…IFICPALTGA (197 aa)) folds into the B30.2/SPRY domain.

The protein belongs to the immunoglobulin superfamily. BTN/MOG family. Post-translationally, N-glycosylated.

The protein localises to the membrane. Functionally, inhibits the proliferation of CD4 and CD8 T-cells activated by anti-CD3 antibodies, T-cell metabolism and IL2 and IFNG secretion. This Pongo abelii (Sumatran orangutan) protein is Butyrophilin subfamily 2 member A2 (BTN2A2).